Here is a 233-residue protein sequence, read N- to C-terminus: Small ribosomal subunit protein uS2 (233 aa).

The protein belongs to the universal ribosomal protein uS2 family.

The chain is Small ribosomal subunit protein uS2 from Prochlorococcus marinus (strain MIT 9312).